A 267-amino-acid chain; its full sequence is Outer membrane protein assembly factor BamD (267 aa).

The first 16 residues, 1–16 (MKKILLTVSLGLALSA), serve as a signal peptide directing secretion. A lipid anchor (N-palmitoyl cysteine) is attached at cysteine 17. A lipid anchor (S-diacylglycerol cysteine) is attached at cysteine 17.

It belongs to the BamD family. In terms of assembly, part of the Bam complex.

The protein resides in the cell outer membrane. Part of the outer membrane protein assembly complex, which is involved in assembly and insertion of beta-barrel proteins into the outer membrane. Required for efficient transformation of Neisseria meningitidis by species-related DNA. In Neisseria meningitidis serogroup A / serotype 4A (strain DSM 15465 / Z2491), this protein is Outer membrane protein assembly factor BamD.